A 130-amino-acid chain; its full sequence is Small ribosomal subunit protein uS9 (130 aa).

It belongs to the universal ribosomal protein uS9 family.

The polypeptide is Small ribosomal subunit protein uS9 (Cupriavidus pinatubonensis (strain JMP 134 / LMG 1197) (Cupriavidus necator (strain JMP 134))).